The primary structure comprises 656 residues: DNA ligase (656 aa).

NAD(+)-binding positions include 32-36 and 81-82; these read DAIYD and SL. The active-site N6-AMP-lysine intermediate is Lys-112. NAD(+)-binding residues include Arg-133, Glu-167, and Lys-306. The Zn(2+) site is built by Cys-400, Cys-403, Cys-416, and Cys-421. The 80-residue stretch at 577 to 656 folds into the BRCT domain; it reads KSSSVFNNKT…ELLKRLKELD (80 aa).

It belongs to the NAD-dependent DNA ligase family. LigA subfamily. Requires Mg(2+) as cofactor. Mn(2+) is required as a cofactor.

It carries out the reaction NAD(+) + (deoxyribonucleotide)n-3'-hydroxyl + 5'-phospho-(deoxyribonucleotide)m = (deoxyribonucleotide)n+m + AMP + beta-nicotinamide D-nucleotide.. In terms of biological role, DNA ligase that catalyzes the formation of phosphodiester linkages between 5'-phosphoryl and 3'-hydroxyl groups in double-stranded DNA using NAD as a coenzyme and as the energy source for the reaction. It is essential for DNA replication and repair of damaged DNA. The protein is DNA ligase of Helicobacter pylori (strain ATCC 700392 / 26695) (Campylobacter pylori).